The following is a 455-amino-acid chain: Anaerobic glycerol-3-phosphate dehydrogenase subunit B (455 aa).

Belongs to the anaerobic G-3-P dehydrogenase subunit B family. As to quaternary structure, composed of a catalytic GlpA/B dimer and of membrane bound GlpC. It depends on FMN as a cofactor.

The catalysed reaction is a quinone + sn-glycerol 3-phosphate = dihydroxyacetone phosphate + a quinol. It functions in the pathway polyol metabolism; glycerol degradation via glycerol kinase pathway; glycerone phosphate from sn-glycerol 3-phosphate (anaerobic route): step 1/1. Functionally, conversion of glycerol 3-phosphate to dihydroxyacetone. Uses fumarate or nitrate as electron acceptor. This chain is Anaerobic glycerol-3-phosphate dehydrogenase subunit B, found in Aliivibrio fischeri (strain ATCC 700601 / ES114) (Vibrio fischeri).